The following is a 388-amino-acid chain: Processive diacylglycerol beta-glucosyltransferase (388 aa).

Belongs to the glycosyltransferase 28 family. UgtP subfamily.

The protein resides in the cell membrane. The enzyme catalyses a 1,2-diacyl-3-O-(beta-D-glucopyranosyl)-sn-glycerol + UDP-alpha-D-glucose = a 1,2-diacyl-3-O-(beta-D-Glc-(1-&gt;6)-beta-D-Glc)-sn-glycerol + UDP + H(+). It catalyses the reaction a 1,2-diacyl-3-O-(beta-D-Glc-(1-&gt;6)-beta-D-Glc)-sn-glycerol + UDP-alpha-D-glucose = a 1,2-diacyl-3-O-(beta-D-Glc-(1-&gt;6)-beta-D-Glc-(1-&gt;6)-beta-D-Glc)-sn-glycerol + UDP + H(+). The catalysed reaction is a 1,2-diacyl-sn-glycerol + UDP-alpha-D-glucose = a 1,2-diacyl-3-O-(beta-D-glucopyranosyl)-sn-glycerol + UDP + H(+). The protein operates within glycolipid metabolism; diglucosyl-diacylglycerol biosynthesis. Processive glucosyltransferase involved in the biosynthesis of both the bilayer- and non-bilayer-forming membrane glucolipids. Is able to successively transfer up to three glucosyl residues to diacylglycerol (DAG), thereby catalyzing the formation of beta-monoglucosyl-DAG (3-O-(beta-D-glucopyranosyl)-1,2-diacyl-sn-glycerol), beta-diglucosyl-DAG (3-O-(beta-D-glucopyranosyl-beta-(1-&gt;6)-D-glucopyranosyl)-1,2-diacyl-sn-glycerol) and beta-triglucosyl-DAG (3-O-(beta-D-glucopyranosyl-beta-(1-&gt;6)-D-glucopyranosyl-beta-(1-&gt;6)-D-glucopyranosyl)-1,2-diacyl-sn-glycerol). Beta-diglucosyl-DAG is the predominant glycolipid found in Bacillales and is also used as a membrane anchor for lipoteichoic acid (LTA). This Bacillus cereus (strain ATCC 10987 / NRS 248) protein is Processive diacylglycerol beta-glucosyltransferase.